A 62-amino-acid chain; its full sequence is Potassium channel toxin alpha-KTx 18.3 (62 aa).

The N-terminal stretch at 1–26 (MHFSGVAFILISMVLIGSIFETTVEA) is a signal peptide. 3 cysteine pairs are disulfide-bonded: cysteine 34–cysteine 53, cysteine 39–cysteine 58, and cysteine 43–cysteine 60.

The protein belongs to the short scorpion toxin superfamily. Potassium channel inhibitor family. Alpha-KTx 18 subfamily. Expressed by the venom gland.

The protein localises to the secreted. Probable voltage-gated potassium channel inhibitor. The chain is Potassium channel toxin alpha-KTx 18.3 from Tityus discrepans (Venezuelan scorpion).